The primary structure comprises 147 residues: UPF0306 protein YhbP (147 aa).

The protein belongs to the UPF0306 family.

This Salmonella agona (strain SL483) protein is UPF0306 protein YhbP.